We begin with the raw amino-acid sequence, 317 residues long: NADH-quinone oxidoreductase subunit H 1 (317 aa).

8 consecutive transmembrane segments (helical) span residues Ile-7 to Trp-27, Ala-74 to Val-94, Ile-107 to Gly-127, Leu-147 to Phe-167, Leu-179 to Glu-199, Phe-230 to Phe-250, Val-257 to Leu-277, and Val-297 to Ala-317.

This sequence belongs to the complex I subunit 1 family. In terms of assembly, NDH-1 is composed of 14 different subunits. Subunits NuoA, H, J, K, L, M, N constitute the membrane sector of the complex.

Its subcellular location is the cell inner membrane. It carries out the reaction a quinone + NADH + 5 H(+)(in) = a quinol + NAD(+) + 4 H(+)(out). Functionally, NDH-1 shuttles electrons from NADH, via FMN and iron-sulfur (Fe-S) centers, to quinones in the respiratory chain. The immediate electron acceptor for the enzyme in this species is believed to be ubiquinone. Couples the redox reaction to proton translocation (for every two electrons transferred, four hydrogen ions are translocated across the cytoplasmic membrane), and thus conserves the redox energy in a proton gradient. This subunit may bind ubiquinone. The polypeptide is NADH-quinone oxidoreductase subunit H 1 (Nitrosospira multiformis (strain ATCC 25196 / NCIMB 11849 / C 71)).